We begin with the raw amino-acid sequence, 234 residues long: Fibrillarin-like rRNA/tRNA 2'-O-methyltransferase (234 aa).

S-adenosyl-L-methionine is bound by residues Thr-90–Thr-91, Glu-109–Phe-110, Asp-134–Ala-135, and Asp-154–Gln-157.

The protein belongs to the methyltransferase superfamily. Fibrillarin family. In terms of assembly, interacts with nop5. Component of box C/D small ribonucleoprotein (sRNP) particles that contain rpl7ae, FlpA and nop5, plus a guide RNA.

Its function is as follows. Involved in pre-rRNA and tRNA processing. Utilizes the methyl donor S-adenosyl-L-methionine to catalyze the site-specific 2'-hydroxyl methylation of ribose moieties in rRNA and tRNA. Site specificity is provided by a guide RNA that base pairs with the substrate. Methylation occurs at a characteristic distance from the sequence involved in base pairing with the guide RNA. This Staphylothermus marinus (strain ATCC 43588 / DSM 3639 / JCM 9404 / F1) protein is Fibrillarin-like rRNA/tRNA 2'-O-methyltransferase.